The sequence spans 526 residues: Exodeoxyribonuclease 7 large subunit (526 aa).

The tract at residues 497-526 (AMTTEGGTPPAGAKKRSTKPAEPPKQGSLF) is disordered.

The protein belongs to the XseA family. As to quaternary structure, heterooligomer composed of large and small subunits.

Its subcellular location is the cytoplasm. It carries out the reaction Exonucleolytic cleavage in either 5'- to 3'- or 3'- to 5'-direction to yield nucleoside 5'-phosphates.. Its function is as follows. Bidirectionally degrades single-stranded DNA into large acid-insoluble oligonucleotides, which are then degraded further into small acid-soluble oligonucleotides. In Rhizobium johnstonii (strain DSM 114642 / LMG 32736 / 3841) (Rhizobium leguminosarum bv. viciae), this protein is Exodeoxyribonuclease 7 large subunit.